Consider the following 346-residue polypeptide: GTP-binding RHO-like protein (346 aa).

Residues 1–10 (MTPNGSRRHS) are compositionally biased toward basic residues. Residues 1 to 25 (MTPNGSRRHSAYMGSPRSQHSSTME) form a disordered region. Residues 16–25 (PRSQHSSTME) show a composition bias toward polar residues. Position 82-89 (82-89 (GDGGCGKT)) interacts with GTP. The short motif at 104–112 (YVPTVFENY) is the Effector region element. Residues 130 to 134 (DTAGQ) and 188 to 191 (TKSD) contribute to the GTP site. Residues 259-294 (LGGSNGGSGNHSRHHSRNYSNVSNNRRGHLKNTSYD) form a disordered region. At Cys343 the chain carries Cysteine methyl ester. Cys343 carries the S-geranylgeranyl cysteine lipid modification. The propeptide at 344 to 346 (VIL) is removed in mature form.

This sequence belongs to the small GTPase superfamily. Rho family.

It localises to the cell membrane. In Candida albicans (strain WO-1) (Yeast), this protein is GTP-binding RHO-like protein (CRL1).